We begin with the raw amino-acid sequence, 375 residues long: Chaperone protein DnaJ (375 aa).

The J domain occupies 4–69 (DLYETLGVQK…QKRAAYDRYG (66 aa)). The segment at 133–211 (GKTAQIRVPT…CHGQGRVVEE (79 aa)) adopts a CR-type zinc-finger fold. Zn(2+) contacts are provided by cysteine 146, cysteine 149, cysteine 163, cysteine 166, cysteine 185, cysteine 188, cysteine 199, and cysteine 202. CXXCXGXG motif repeat units lie at residues 146-153 (CDVCTGTG), 163-170 (CGTCQGTG), 185-192 (CPTCGGRG), and 199-206 (CTKCHGQG).

Belongs to the DnaJ family. As to quaternary structure, homodimer. The cofactor is Zn(2+).

Its subcellular location is the cytoplasm. Participates actively in the response to hyperosmotic and heat shock by preventing the aggregation of stress-denatured proteins and by disaggregating proteins, also in an autonomous, DnaK-independent fashion. Unfolded proteins bind initially to DnaJ; upon interaction with the DnaJ-bound protein, DnaK hydrolyzes its bound ATP, resulting in the formation of a stable complex. GrpE releases ADP from DnaK; ATP binding to DnaK triggers the release of the substrate protein, thus completing the reaction cycle. Several rounds of ATP-dependent interactions between DnaJ, DnaK and GrpE are required for fully efficient folding. Also involved, together with DnaK and GrpE, in the DNA replication of plasmids through activation of initiation proteins. The polypeptide is Chaperone protein DnaJ (Sinorhizobium medicae (strain WSM419) (Ensifer medicae)).